We begin with the raw amino-acid sequence, 394 residues long: MASIVQPSPTFPALNLRRSSLIRPPSSVRFPLKCNAADPYKFDGGNSAGFHLLTGDTVPASFSRTRLEDSIYQNTTRLRIFSGTANPILAQEISCYLGLDLGKIKIKRFADGEIYVQLQESVRGCDVFLVQPTCPPANENLMELLVMIDACRRASAKTITAVIPYFGYARADRKTQGRESIAAKLVANLITQSGADRVLACDLHSGQSMGYFDIPVDHVYGQPVILDYLASKAISSEDLVVVSPDVGGVARARAFAKKLSDAPLAIVDKRRHGHNVAEVMNLIGDVKGKVAIMVDDMIDTAGTISKGAALLHQEGAREVYACTTHAVFSPPAISRLSSGLFQEVIITNTIPLSEKNYFPQLTVLSVANLLGETIWRVHDDCSGAIEPFSTLGID.

A chloroplast-targeting transit peptide spans 1-33; sequence MASIVQPSPTFPALNLRRSSLIRPPSSVRFPLK. Positions 202, 204, 213, and 217 each coordinate Mg(2+). Residues 288–303 form a binding of phosphoribosylpyrophosphate region; sequence GKVAIMVDDMIDTAGT.

It belongs to the ribose-phosphate pyrophosphokinase family.

The protein localises to the plastid. It is found in the chloroplast. The catalysed reaction is D-ribose 5-phosphate + ATP = 5-phospho-alpha-D-ribose 1-diphosphate + AMP + H(+). The sequence is that of Ribose-phosphate pyrophosphokinase 5, chloroplastic (PRS5) from Arabidopsis thaliana (Mouse-ear cress).